The chain runs to 2481 residues: Tetratricopeptide repeat protein 28 (2481 aa).

The residue at position 1 (methionine 1) is an N-acetylmethionine. A compositionally biased stretch (pro residues) spans 1 to 14; the sequence is MEQSPPPAPEPTQG. The interval 1 to 48 is disordered; sequence MEQSPPPAPEPTQGPTPARSRRRREPESPPASAPIPLFGADTIGQRSP. A Phosphoserine modification is found at serine 28. TPR repeat units lie at residues 58–91, 93–125, 126–159, 196–229, 234–267, 274–307, 314–347, 354–387, 394–427, 434–467, 474–507, 514–547, 554–587, 594–627, 634–667, 674–707, 714–747, 754–787, 794–827, 834–867, 877–910, 917–950, 957–990, 997–1030, 1037–1070, 1077–1110, 1117–1150, and 1169–1202; these read FVEK…DPQN, ILYS…NPKW, PKAY…DPKS, FVVV…GTCS, GSVF…AKTL, CRAH…AMKL, SSAL…AKQS, AREL…AKDL, ARAY…AQEL, MRAY…AEDL, GRAS…AQEL, GRAY…SMEV, ASTH…AREL, ARAL…APDL, GKVC…AKDL, AKAY…AQSL, FRAL…AHQV, ASAY…YQEL, CRAH…GQKL, AQVY…LQQL, GRAY…AQSL, AKAY…AHEL, AQAY…ARDM, SDAA…AEET, GRAY…AAQM, TVSY…AEQL, AKIR…FETI, and TSSY…AFAD. Phosphoserine is present on serine 1590. 3 disordered regions span residues 2004 to 2055, 2075 to 2161, and 2176 to 2339; these read FVSK…DEEE, NTCF…DPQE, and AVER…PADA. 2 stretches are compositionally biased toward polar residues: residues 2029–2043 and 2096–2122; these read AYLQ…QLPP and SVSS…NSPF. A Phosphoserine modification is found at serine 2104. Over residues 2130–2146 the composition is skewed to low complexity; it reads SSDTGESDQSSTETDST. Basic and acidic residues predominate over residues 2149–2159; sequence SQEESNPKLDP. Residues 2183 to 2214 show a composition bias toward polar residues; sequence SGGQVSKSNNPEDGVQAPSSTAVFRASETSAF. Residues serine 2224 and serine 2251 each carry the phosphoserine modification. The span at 2238–2282 shows a compositional bias: polar residues; the sequence is RSSSLPKVSSGYSSPTTSEMSIKDSPSQHSGRPSPGCDSQTSQLD. A compositionally biased stretch (low complexity) spans 2307 to 2339; that stretch reads SPSSGHQSPAGSAPSPALSYSSAGSARSSPADA. 2 positions are modified to phosphoserine: serine 2393 and serine 2398. Residues 2420–2467 are disordered; it reads QHDGAPPKAPPNGHWRTETTSLGSLPLPAGPPATAPARPLRLPSGNGY.

Interacts with AURKB. As to expression, widely expressed in fetal tissues. In adult tissues, expressed in testis and ovary and, at much lower levels, in kidney and pancreas.

It localises to the cytoplasm. The protein localises to the cytoskeleton. Its subcellular location is the microtubule organizing center. The protein resides in the centrosome. It is found in the spindle. It localises to the spindle pole. The protein localises to the midbody. Its function is as follows. During mitosis, may be involved in the condensation of spindle midzone microtubules, leading to the formation of midbody. The polypeptide is Tetratricopeptide repeat protein 28 (TTC28) (Homo sapiens (Human)).